The sequence spans 44 residues: Viresin (44 aa).

This sequence belongs to the insect A10/OS-D protein family.

The protein resides in the secreted. Has antibacterial activity against the Gram-negative bacteria E.coli and E.cloacae, but not against the Gram-negative bacteria P.aeruginosa, P.vulgaris, K.pneumoniae and S.enteritidis or the Gram-positive bacteria S.aureus, S.epidermidis and S.salivarius. The chain is Viresin from Heliothis virescens (Tobacco budworm moth).